Consider the following 121-residue polypeptide: Small ribosomal subunit protein uS13 (121 aa).

The tract at residues 96-121 (PVRGQNTKNNARTRKGKAVAIAGKKK) is disordered. Over residues 106-121 (ARTRKGKAVAIAGKKK) the composition is skewed to basic residues.

This sequence belongs to the universal ribosomal protein uS13 family. In terms of assembly, part of the 30S ribosomal subunit. Forms a loose heterodimer with protein S19. Forms two bridges to the 50S subunit in the 70S ribosome.

Its function is as follows. Located at the top of the head of the 30S subunit, it contacts several helices of the 16S rRNA. In the 70S ribosome it contacts the 23S rRNA (bridge B1a) and protein L5 of the 50S subunit (bridge B1b), connecting the 2 subunits; these bridges are implicated in subunit movement. Contacts the tRNAs in the A and P-sites. This is Small ribosomal subunit protein uS13 from Streptococcus gordonii (strain Challis / ATCC 35105 / BCRC 15272 / CH1 / DL1 / V288).